A 20-amino-acid polypeptide reads, in one-letter code: Unknown protein NF040 from 2D-PAGE (20 aa).

Residues 1–20 (MKVYTDIFTRDEFLSDSYPM) form the TCTP domain.

The protein belongs to the TCTP family.

The protein is Unknown protein NF040 from 2D-PAGE of Naegleria fowleri (Brain eating amoeba).